The chain runs to 191 residues: ADP-ribosylation factor (191 aa).

A lipid anchor (N-myristoyl glycine) is attached at glycine 2. Residues 24–31 (GLDAAGKT), 67–71 (DVGGQ), and 128–131 (NKQD) each bind GTP.

The protein belongs to the small GTPase superfamily. Arf family.

It localises to the golgi apparatus. Its function is as follows. GTP-binding protein involved in protein trafficking; may modulate vesicle budding and uncoating within the Golgi apparatus. This chain is ADP-ribosylation factor, found in Giardia intestinalis (Giardia lamblia).